The chain runs to 264 residues: Thymidylate synthase (264 aa).

Position 21 (Arg-21) interacts with dUMP. His-51 is a binding site for (6R)-5,10-methylene-5,6,7,8-tetrahydrofolate. 126-127 (RR) is a binding site for dUMP. Cys-146 acts as the Nucleophile in catalysis. Residues 166 to 169 (RSCD), Asn-177, and 207 to 209 (HLY) each bind dUMP. Asp-169 contributes to the (6R)-5,10-methylene-5,6,7,8-tetrahydrofolate binding site. (6R)-5,10-methylene-5,6,7,8-tetrahydrofolate is bound at residue Ser-263.

It belongs to the thymidylate synthase family. Bacterial-type ThyA subfamily. In terms of assembly, homodimer.

It localises to the cytoplasm. It catalyses the reaction dUMP + (6R)-5,10-methylene-5,6,7,8-tetrahydrofolate = 7,8-dihydrofolate + dTMP. It functions in the pathway pyrimidine metabolism; dTTP biosynthesis. In terms of biological role, catalyzes the reductive methylation of 2'-deoxyuridine-5'-monophosphate (dUMP) to 2'-deoxythymidine-5'-monophosphate (dTMP) while utilizing 5,10-methylenetetrahydrofolate (mTHF) as the methyl donor and reductant in the reaction, yielding dihydrofolate (DHF) as a by-product. This enzymatic reaction provides an intracellular de novo source of dTMP, an essential precursor for DNA biosynthesis. In Wigglesworthia glossinidia brevipalpis, this protein is Thymidylate synthase.